Here is a 264-residue protein sequence, read N- to C-terminus: Thymidylate synthase (264 aa).

Arg21 contributes to the dUMP binding site. A (6R)-5,10-methylene-5,6,7,8-tetrahydrofolate-binding site is contributed by His51. 126–127 contacts dUMP; it reads RR. The active-site Nucleophile is the Cys146. Residues 166-169, Asn177, and 207-209 contribute to the dUMP site; these read RSCD and HLY. Residue Asp169 coordinates (6R)-5,10-methylene-5,6,7,8-tetrahydrofolate. (6R)-5,10-methylene-5,6,7,8-tetrahydrofolate is bound at residue Ala263.

The protein belongs to the thymidylate synthase family. Bacterial-type ThyA subfamily. Homodimer.

The protein resides in the cytoplasm. It catalyses the reaction dUMP + (6R)-5,10-methylene-5,6,7,8-tetrahydrofolate = 7,8-dihydrofolate + dTMP. It participates in pyrimidine metabolism; dTTP biosynthesis. In terms of biological role, catalyzes the reductive methylation of 2'-deoxyuridine-5'-monophosphate (dUMP) to 2'-deoxythymidine-5'-monophosphate (dTMP) while utilizing 5,10-methylenetetrahydrofolate (mTHF) as the methyl donor and reductant in the reaction, yielding dihydrofolate (DHF) as a by-product. This enzymatic reaction provides an intracellular de novo source of dTMP, an essential precursor for DNA biosynthesis. In Escherichia fergusonii (strain ATCC 35469 / DSM 13698 / CCUG 18766 / IAM 14443 / JCM 21226 / LMG 7866 / NBRC 102419 / NCTC 12128 / CDC 0568-73), this protein is Thymidylate synthase.